A 230-amino-acid polypeptide reads, in one-letter code: uncharacterized protein (230 aa).

The protein to E.coli HemX N-terminal region.

This is an uncharacterized protein from Haemophilus influenzae (strain ATCC 51907 / DSM 11121 / KW20 / Rd).